The sequence spans 737 residues: Polyribonucleotide nucleotidyltransferase (737 aa).

Residues aspartate 489 and aspartate 495 each contribute to the Mg(2+) site. Positions 556 to 615 (PKIDTIKIDVDKIKIVIGKGGETIDKIIAETGVKIDIDEEGNVSIYSSDQDAINRAKEII) constitute a KH domain. The S1 motif domain occupies 625 to 693 (DEVYRAKVVR…EKGRIDASMK (69 aa)). Residues 691 to 737 (SMKALLPRPPKPEHDEKGEKSERPHRPRHHKDHKPKKEFTETPKDSE) form a disordered region. Residues 700–714 (PKPEHDEKGEKSERP) show a composition bias toward basic and acidic residues. Basic residues predominate over residues 715–724 (HRPRHHKDHK). Over residues 725–737 (PKKEFTETPKDSE) the composition is skewed to basic and acidic residues.

This sequence belongs to the polyribonucleotide nucleotidyltransferase family. The cofactor is Mg(2+).

It is found in the cytoplasm. The enzyme catalyses RNA(n+1) + phosphate = RNA(n) + a ribonucleoside 5'-diphosphate. In terms of biological role, involved in mRNA degradation. Catalyzes the phosphorolysis of single-stranded polyribonucleotides processively in the 3'- to 5'-direction. This Streptococcus pneumoniae (strain ATCC 700669 / Spain 23F-1) protein is Polyribonucleotide nucleotidyltransferase.